The primary structure comprises 145 residues: UPF0763 protein WS1752 (145 aa).

The protein belongs to the UPF0763 family.

The sequence is that of UPF0763 protein WS1752 from Wolinella succinogenes (strain ATCC 29543 / DSM 1740 / CCUG 13145 / JCM 31913 / LMG 7466 / NCTC 11488 / FDC 602W) (Vibrio succinogenes).